Consider the following 990-residue polypeptide: MGPPSSSGFYVSRAVALLLAGLVAALLLALAVLAALYGHCERVPPSELPGLRDLEAESSPPLRQKPTPTPKPSSARELAVTTTPSNWRPPGPWDQLRLPPWLVPLHYDLELWPQLRPDELPAGSLPFTGRVNITVRCTVATSRLLLHSLFQDCERAEVRGPLSPGTGNATVGRVPVDDVWFALDTEYMVLELSEPLKPGSSYELQLSFSGLVKEDLREGLFLNVYTDQGERRALLASQLEPTFARYVFPCFDEPALKATFNITMIHHPSYVALSNMPKLGQSEKEDVNGSKWTVTTFSTTPHMPTYLVAFVICDYDHVNRTERGKEIRIWARKDAIANGSADFALNITGPIFSFLEDLFNISYSLPKTDIIALPSFDNHAMENWGLMIFDESGLLLEPKDQLTEKKTLISYVVSHEIGHQWFGNLVTMNWWNNIWLNEGFASYFEFEVINYFNPKLPRNEIFFSNILHNILREDHALVTRAVAMKVENFKTSEIQELFDIFTYSKGASMARMLSCFLNEHLFVSALKSYLKTFSYSNAEQDDLWRHFQMAIDDQSTVILPATIKNIMDSWTHQSGFPVITLNVSTGVMKQEPFYLENIKNRTLLTSNDTWIVPILWIKNGTTQPLVWLDQSSKVFPEMQVSDSDHDWVILNLNMTGYYRVNYDKLGWKKLNQQLEKDPKAIPVIHRLQLIDDAFSLSKNNYIEIETALELTKYLAEEDEIIVWHTVLVNLVTRDLVSEVNIYDIYSLLKRYLLKRLNLIWNIYSTIIRENVLALQDDYLALISLEKLFVTACWLGLEDCLQLSKELFAKWVDHPENEIPYPIKDVVLCYGIALGSDKEWDILLNTYTNTTNKEEKIQLAYAMSCSKDPWILNRYMEYAISTSPFTSNETNIIEVVASSEVGRYVAKDFLVNNWQAVSKRYGTQSLINLIYTIGRTVTTDLQIVELQQFFSNMLEEHQRIRVHANLQTIKNENLKNKKLSARIAAWLRRNT.

Residues 2–13 are Cytoplasmic-facing; the sequence is GPPSSSGFYVSR. A helical; Signal-anchor for type II membrane protein transmembrane segment spans residues 14–34; the sequence is AVALLLAGLVAALLLALAVLA. Over 35–990 the chain is Lumenal; that stretch reads ALYGHCERVP…RIAAWLRRNT (956 aa). Positions 48–91 are disordered; the sequence is LPGLRDLEAESSPPLRQKPTPTPKPSSARELAVTTTPSNWRPPG. 2 N-linked (GlcNAc...) asparagine glycosylation sites follow: Asn132 and Asn168. Substrate is bound at residue Glu240. Asn261, Asn288, Asn319, and Asn346 each carry an N-linked (GlcNAc...) asparagine glycan. 379 to 383 serves as a coordination point for substrate; it reads HAMEN. His415 is a Zn(2+) binding site. The active-site Proton acceptor is Glu416. Residues His419 and Glu438 each contribute to the Zn(2+) site. Residue Tyr503 is the Proton donor of the active site. 2 N-linked (GlcNAc...) asparagine glycosylation sites follow: Asn607 and Asn653.

It belongs to the peptidase M1 family. Homodimer. Zn(2+) is required as a cofactor. N-glycosylated. As to expression, specifically expressed in placenta and not in other tissues. Mainly found at the cell surface region of the extravillous trophoblasts. Detected on extravillous trophoblasts in the outer layer of the chorion laeve in the fetal membrane Not detected on either fetal amnionic epithelial cells or maternal decidual cells. Also detected in the migrating extravillous trophoblasts in the maternal decidual tissues (at protein level).

It localises to the membrane. With respect to regulation, inhibited by bestatin. Functionally, metalloprotease which may be important for placentation by regulating biological activity of key peptides at the embryo-maternal interface. On synthetic substrates it shows a marked preference for Leu-4-methylcoumaryl-7-amide (Leu-MCA) over Met-MCA, Arg-LCA and Lys-LCA. Cleaves the N-terminal amino acid of several peptides such as angiotensin-3, kisspeptin-10 and endokinin C. This chain is Aminopeptidase Q, found in Homo sapiens (Human).